The sequence spans 318 residues: Tumor necrosis factor ligand superfamily member 11 (318 aa).

Topologically, residues Met1–Arg47 are cytoplasmic. The interval Arg13 to Pro41 is disordered. Residues His31 to Pro41 are compositionally biased toward pro residues. The helical; Signal-anchor for type II membrane protein transmembrane segment at Phe48–Phe68 threads the bilayer. Residues Leu69–Asp318 are Extracellular-facing. Residues Pro165 to Val314 form the THD domain. Residues Asn199 and Asn264 are each glycosylated (N-linked (GlcNAc...) asparagine).

The protein belongs to the tumor necrosis factor family. Homotrimer. Interacts with TNFRSF11A and TNFRSF11B. Interacts with FBN1 (via N-terminal domain) in a Ca(+2)-dependent manner. Interacts with TNFAIP6 (via both Link and CUB domains). Post-translationally, the soluble form derives from the membrane form by proteolytic processing. In terms of tissue distribution, highly expressed in thymus and bone tissues.

The protein resides in the cell membrane. The protein localises to the secreted. In terms of biological role, cytokine that binds to TNFRSF11B/OPG and to TNFRSF11A/RANK. Osteoclast differentiation and activation factor. Augments the ability of dendritic cells to stimulate naive T-cell proliferation. May be an important regulator of interactions between T-cells and dendritic cells and may play a role in the regulation of the T-cell-dependent immune response. May also play an important role in enhanced bone-resorption in humoral hypercalcemia of malignancy. Induces osteoclastogenesis by activating multiple signaling pathways in osteoclast precursor cells, chief among which is induction of long lasting oscillations in the intracellular concentration of Ca (2+) resulting in the activation of NFATC1, which translocates to the nucleus and induces osteoclast-specific gene transcription to allow differentiation of osteoclasts. During osteoclast differentiation, in a TMEM64 and ATP2A2-dependent manner induces activation of CREB1 and mitochondrial ROS generation necessary for proper osteoclast generation. The polypeptide is Tumor necrosis factor ligand superfamily member 11 (Tnfsf11) (Rattus norvegicus (Rat)).